The chain runs to 778 residues: Endonuclease MutS2 (778 aa).

328–335 (GPNTGGKT) is an ATP binding site. In terms of domain architecture, Smr spans 702 to 777 (LDLRGKRYEE…GSGATIVTFK (76 aa)).

This sequence belongs to the DNA mismatch repair MutS family. MutS2 subfamily. In terms of assembly, homodimer. Binds to stalled ribosomes, contacting rRNA.

Functionally, endonuclease that is involved in the suppression of homologous recombination and thus may have a key role in the control of bacterial genetic diversity. Its function is as follows. Acts as a ribosome collision sensor, splitting the ribosome into its 2 subunits. Detects stalled/collided 70S ribosomes which it binds and splits by an ATP-hydrolysis driven conformational change. Acts upstream of the ribosome quality control system (RQC), a ribosome-associated complex that mediates the extraction of incompletely synthesized nascent chains from stalled ribosomes and their subsequent degradation. Probably generates substrates for RQC. This Streptococcus pneumoniae (strain JJA) protein is Endonuclease MutS2.